A 693-amino-acid polypeptide reads, in one-letter code: Elongation factor G (693 aa).

The tr-type G domain occupies aspartate 8 to threonine 284. GTP-binding positions include alanine 17–threonine 24, aspartate 81–histidine 85, and asparagine 135–aspartate 138.

Belongs to the TRAFAC class translation factor GTPase superfamily. Classic translation factor GTPase family. EF-G/EF-2 subfamily.

It localises to the cytoplasm. Catalyzes the GTP-dependent ribosomal translocation step during translation elongation. During this step, the ribosome changes from the pre-translocational (PRE) to the post-translocational (POST) state as the newly formed A-site-bound peptidyl-tRNA and P-site-bound deacylated tRNA move to the P and E sites, respectively. Catalyzes the coordinated movement of the two tRNA molecules, the mRNA and conformational changes in the ribosome. This chain is Elongation factor G, found in Fusobacterium nucleatum subsp. nucleatum (strain ATCC 25586 / DSM 15643 / BCRC 10681 / CIP 101130 / JCM 8532 / KCTC 2640 / LMG 13131 / VPI 4355).